A 500-amino-acid chain; its full sequence is Cytochrome P450 2D26 (500 aa).

Residue Ser-249 is modified to Phosphoserine. Residue Cys-446 participates in heme binding.

The protein belongs to the cytochrome P450 family. Heme serves as cofactor.

It localises to the endoplasmic reticulum membrane. It is found in the microsome membrane. The enzyme catalyses an organic molecule + reduced [NADPH--hemoprotein reductase] + O2 = an alcohol + oxidized [NADPH--hemoprotein reductase] + H2O + H(+). Functionally, cytochromes P450 are a group of heme-thiolate monooxygenases. In liver microsomes, this enzyme is involved in an NADPH-dependent electron transport pathway. It oxidizes a variety of structurally unrelated compounds, including steroids, fatty acids, and xenobiotics. The protein is Cytochrome P450 2D26 of Mus musculus (Mouse).